Consider the following 156-residue polypeptide: Ribosomal RNA large subunit methyltransferase H (156 aa).

S-adenosyl-L-methionine contacts are provided by residues Leu73, Gly104, and 123 to 128; that span reads LSALTL.

It belongs to the RNA methyltransferase RlmH family. In terms of assembly, homodimer.

Its subcellular location is the cytoplasm. The catalysed reaction is pseudouridine(1915) in 23S rRNA + S-adenosyl-L-methionine = N(3)-methylpseudouridine(1915) in 23S rRNA + S-adenosyl-L-homocysteine + H(+). Its function is as follows. Specifically methylates the pseudouridine at position 1915 (m3Psi1915) in 23S rRNA. This is Ribosomal RNA large subunit methyltransferase H from Shewanella pealeana (strain ATCC 700345 / ANG-SQ1).